Consider the following 100-residue polypeptide: Small ribosomal subunit protein uS14c (100 aa).

The segment at 1-31 (MARKSLIQREKKRQKLEQKYHSIRRSSKKEI) is disordered.

This sequence belongs to the universal ribosomal protein uS14 family. As to quaternary structure, part of the 30S ribosomal subunit.

The protein resides in the plastid. The protein localises to the chloroplast. In terms of biological role, binds 16S rRNA, required for the assembly of 30S particles. This Nicotiana tomentosiformis (Tobacco) protein is Small ribosomal subunit protein uS14c.